The primary structure comprises 64 residues: Large ribosomal subunit protein bL28C (64 aa).

Belongs to the bacterial ribosomal protein bL28 family.

The sequence is that of Large ribosomal subunit protein bL28C from Mycobacterium tuberculosis (strain ATCC 25618 / H37Rv).